The following is a 208-amino-acid chain: F-box/kelch-repeat protein At2g43270 (208 aa).

The F-box domain maps to 1–44 (MIYVVPDLLEEIFLGLPLKSILRFKTVSKQWRSILESKSFAERR). The stretch at 149–200 (RDKFNGSYKVVRMCFSPVEKCEVLDVETGEWSELNPPPNDIDVGRKSVCVNG) is one Kelch repeat.

This is F-box/kelch-repeat protein At2g43270 from Arabidopsis thaliana (Mouse-ear cress).